Here is a 274-residue protein sequence, read N- to C-terminus: tRNA pseudouridine synthase A (274 aa).

D57 (nucleophile) is an active-site residue. Residue Y115 coordinates substrate.

The protein belongs to the tRNA pseudouridine synthase TruA family. As to quaternary structure, homodimer.

It carries out the reaction uridine(38/39/40) in tRNA = pseudouridine(38/39/40) in tRNA. Functionally, formation of pseudouridine at positions 38, 39 and 40 in the anticodon stem and loop of transfer RNAs. The polypeptide is tRNA pseudouridine synthase A (Frankia casuarinae (strain DSM 45818 / CECT 9043 / HFP020203 / CcI3)).